Consider the following 269-residue polypeptide: MAVVTMRELLDAGVHFGHQTRRWNPKMRRFIFTDRNGIYIIDLQQTLTYIDEAYEFVKETVAHGGNILFVGTKKQAQEAVANEAERVGMPYVNHRWLGGMLTNFQTVSKRLARMKELQAMDAAEDGYQGRTKKEILLLNREREKLERVLGGIADMTKVPSAMWVVDTNKEHIAVSEAKKLGIPVVAILDTNCDPDEVQYPVPGNDDAIRSANLLTSIISSAVEEGRKARAERQAAAAKDAAGDTGKSEADAEAVKAEAAAEEKAETTEA.

Positions 228-269 are disordered; that stretch reads ARAERQAAAAKDAAGDTGKSEADAEAVKAEAAAEEKAETTEA. Low complexity predominate over residues 233–244; the sequence is QAAAAKDAAGDT. Basic and acidic residues predominate over residues 245-269; sequence GKSEADAEAVKAEAAAEEKAETTEA.

Belongs to the universal ribosomal protein uS2 family.

The chain is Small ribosomal subunit protein uS2 from Corynebacterium urealyticum (strain ATCC 43042 / DSM 7109).